Consider the following 166-residue polypeptide: MSSAIDTKKVVVEEIASKLKESKSTIIVDYRGLNVSEVTELRKQLREANVEFKVYKNTMTRRAVEQAELDGLNDVLTGPNAIAFSTEDVIAPAKVLNEFAKNHEALEIKAGVIEGKVSSVEEVKALAELPSRDGLLSMLLSVLQAPVRNLALAAKAVADQKEEQGA.

The protein belongs to the universal ribosomal protein uL10 family. Part of the ribosomal stalk of the 50S ribosomal subunit. The N-terminus interacts with L11 and the large rRNA to form the base of the stalk. The C-terminus forms an elongated spine to which L12 dimers bind in a sequential fashion forming a multimeric L10(L12)X complex.

In terms of biological role, forms part of the ribosomal stalk, playing a central role in the interaction of the ribosome with GTP-bound translation factors. The sequence is that of Large ribosomal subunit protein uL10 from Bacillus velezensis (strain DSM 23117 / BGSC 10A6 / LMG 26770 / FZB42) (Bacillus amyloliquefaciens subsp. plantarum).